The following is a 340-amino-acid chain: Nuclear hormone receptor family member nhr-197 (340 aa).

Residues 1–75 (MNCVVCSGRA…VGMTLAPLND (75 aa)) constitute a DNA-binding region (nuclear receptor). NR C4-type zinc fingers lie at residues 3-23 (CVVC…CFAC) and 39-58 (CKRI…CRAC). Residues 98-337 (KNDKNYSHFV…KRIMQDLFSN (240 aa)) enclose the NR LBD domain.

This sequence belongs to the nuclear hormone receptor family.

The protein localises to the nucleus. Functionally, orphan nuclear receptor. The protein is Nuclear hormone receptor family member nhr-197 (nhr-197) of Caenorhabditis elegans.